A 78-amino-acid chain; its full sequence is Probable Fe(2+)-trafficking protein (78 aa).

This sequence belongs to the Fe(2+)-trafficking protein family. As to quaternary structure, monomer.

Functionally, could be a mediator in iron transactions between iron acquisition and iron-requiring processes, such as synthesis and/or repair of Fe-S clusters in biosynthetic enzymes. The sequence is that of Probable Fe(2+)-trafficking protein from Buchnera aphidicola subsp. Schizaphis graminum (strain Sg).